A 1477-amino-acid polypeptide reads, in one-letter code: Inositol hexakisphosphate and diphosphoinositol-pentakisphosphate kinase 1 (1477 aa).

Positions 27–47 are disordered; sequence TRGLGMRPEESDSELLEDEED. The span at 37–47 shows a compositional bias: acidic residues; the sequence is SDSELLEDEED. Position 64 to 65 (64 to 65) interacts with substrate; that stretch reads KK. ATP-binding positions include Arg145, Lys198, His205, Arg224, 248–251, and 257–259; these read EEFM and DVK. 224 to 225 serves as a coordination point for substrate; sequence RK. Lys259 and Arg273 together coordinate substrate. Residues Ser275, Asp320, and 332–334 each bind ATP; that span reads DVN. 337–340 provides a ligand contact to substrate; the sequence is SFVK. The tract at residues 382 to 453 is polyphosphoinositide-binding domain; the sequence is PTTSGTMMEL…VLDITRLLLA (72 aa). The disordered stretch occupies residues 910–1016; that stretch reads KGVEEEGSAP…PTEMKQSGLG (107 aa). Phosphoserine is present on residues Ser940 and Ser983. A compositionally biased stretch (polar residues) spans 1001-1016; sequence FSSSRPPTEMKQSGLG. Phosphoserine occurs at positions 1033, 1069, 1141, and 1148. Disordered stretches follow at residues 1131-1248 and 1438-1477; these read HSNQ…KPCQ and REEV…SFSH. Over residues 1164 to 1182 the composition is skewed to low complexity; that stretch reads SSGPSSTVSSAGPSSPTAV. Over residues 1446–1460 the composition is skewed to polar residues; sequence CPPSNANPQSQSLAP.

Belongs to the histidine acid phosphatase family. VIP1 subfamily.

It is found in the cytoplasm. The protein localises to the cytosol. It localises to the cell membrane. The enzyme catalyses 1D-myo-inositol hexakisphosphate + ATP = 1-diphospho-1D-myo-inositol 2,3,4,5,6-pentakisphosphate + ADP. It carries out the reaction 5-diphospho-1D-myo-inositol 1,2,3,4,6-pentakisphosphate + ATP + H(+) = 1,5-bis(diphospho)-1D-myo-inositol 2,3,4,6-tetrakisphosphate + ADP. Functionally, bifunctional inositol kinase that acts in concert with the IP6K kinases IP6K1, IP6K2 and IP6K3 to synthesize the diphosphate group-containing inositol pyrophosphates diphosphoinositol pentakisphosphate, PP-InsP5, and bis-diphosphoinositol tetrakisphosphate, (PP)2-InsP4. PP-InsP5 and (PP)2-InsP4, also respectively called InsP7 and InsP8, regulate a variety of cellular processes, including apoptosis, vesicle trafficking, cytoskeletal dynamics, exocytosis, insulin signaling and neutrophil activation. Phosphorylates inositol hexakisphosphate (InsP6) at position 1 to produce PP-InsP5 which is in turn phosphorylated by IP6Ks to produce (PP)2-InsP4. Alternatively, phosphorylates PP-InsP5 at position 1, produced by IP6Ks from InsP6, to produce (PP)2-InsP4. Activated when cells are exposed to hyperosmotic stress. This Bos taurus (Bovine) protein is Inositol hexakisphosphate and diphosphoinositol-pentakisphosphate kinase 1.